The sequence spans 398 residues: Dual-specificity RNA methyltransferase RlmN (398 aa).

Residue E100 is the Proton acceptor of the active site. The Radical SAM core domain occupies 106-345; that stretch reads DGDRGTLCVS…TTVRTTRGDD (240 aa). Cysteines 113 and 350 form a disulfide. [4Fe-4S] cluster-binding residues include C120, C124, and C127. S-adenosyl-L-methionine-binding positions include 174-175, S206, 228-230, and N307; these read GE and SLH. C350 functions as the S-methylcysteine intermediate in the catalytic mechanism.

This sequence belongs to the radical SAM superfamily. RlmN family. [4Fe-4S] cluster is required as a cofactor.

The protein localises to the cytoplasm. The enzyme catalyses adenosine(2503) in 23S rRNA + 2 reduced [2Fe-2S]-[ferredoxin] + 2 S-adenosyl-L-methionine = 2-methyladenosine(2503) in 23S rRNA + 5'-deoxyadenosine + L-methionine + 2 oxidized [2Fe-2S]-[ferredoxin] + S-adenosyl-L-homocysteine. It catalyses the reaction adenosine(37) in tRNA + 2 reduced [2Fe-2S]-[ferredoxin] + 2 S-adenosyl-L-methionine = 2-methyladenosine(37) in tRNA + 5'-deoxyadenosine + L-methionine + 2 oxidized [2Fe-2S]-[ferredoxin] + S-adenosyl-L-homocysteine. In terms of biological role, specifically methylates position 2 of adenine 2503 in 23S rRNA and position 2 of adenine 37 in tRNAs. m2A2503 modification seems to play a crucial role in the proofreading step occurring at the peptidyl transferase center and thus would serve to optimize ribosomal fidelity. The protein is Dual-specificity RNA methyltransferase RlmN of Saccharophagus degradans (strain 2-40 / ATCC 43961 / DSM 17024).